Reading from the N-terminus, the 57-residue chain is Large ribosomal subunit protein bL32 (57 aa).

A disordered region spans residues 1-20 (MAVQQRRVSKSRKGMRRSHD). Positions 7–19 (RVSKSRKGMRRSH) are enriched in basic residues.

This sequence belongs to the bacterial ribosomal protein bL32 family.

This Ureaplasma urealyticum serovar 10 (strain ATCC 33699 / Western) protein is Large ribosomal subunit protein bL32.